A 154-amino-acid polypeptide reads, in one-letter code: Myoglobin (154 aa).

The Globin domain occupies G2–K148. Residue H65 coordinates nitrite. H65 contributes to the O2 binding site. A heme b-binding site is contributed by H94.

It belongs to the globin family. In terms of assembly, monomeric.

Its subcellular location is the cytoplasm. It is found in the sarcoplasm. It carries out the reaction Fe(III)-heme b-[protein] + nitric oxide + H2O = Fe(II)-heme b-[protein] + nitrite + 2 H(+). It catalyses the reaction H2O2 + AH2 = A + 2 H2O. Monomeric heme protein which primary function is to store oxygen and facilitate its diffusion within muscle tissues. Reversibly binds oxygen through a pentacoordinated heme iron and enables its timely and efficient release as needed during periods of heightened demand. Depending on the oxidative conditions of tissues and cells, and in addition to its ability to bind oxygen, it also has a nitrite reductase activity whereby it regulates the production of bioactive nitric oxide. Under stress conditions, like hypoxia and anoxia, it also protects cells against reactive oxygen species thanks to its pseudoperoxidase activity. The polypeptide is Myoglobin (MB) (Chelonia mydas (Green sea-turtle)).